Consider the following 352-residue polypeptide: N-acetyl-gamma-glutamyl-phosphate reductase (352 aa).

Cys-156 is a catalytic residue.

This sequence belongs to the NAGSA dehydrogenase family. Type 1 subfamily.

It is found in the cytoplasm. The catalysed reaction is N-acetyl-L-glutamate 5-semialdehyde + phosphate + NADP(+) = N-acetyl-L-glutamyl 5-phosphate + NADPH + H(+). The protein operates within amino-acid biosynthesis; L-arginine biosynthesis; N(2)-acetyl-L-ornithine from L-glutamate: step 3/4. Its function is as follows. Catalyzes the NADPH-dependent reduction of N-acetyl-5-glutamyl phosphate to yield N-acetyl-L-glutamate 5-semialdehyde. The polypeptide is N-acetyl-gamma-glutamyl-phosphate reductase (Afipia carboxidovorans (strain ATCC 49405 / DSM 1227 / KCTC 32145 / OM5) (Oligotropha carboxidovorans)).